The sequence spans 102 residues: Large ribosomal subunit protein uL23 (102 aa).

The protein belongs to the universal ribosomal protein uL23 family. Part of the 50S ribosomal subunit. Contacts protein L29, and trigger factor when it is bound to the ribosome.

One of the early assembly proteins it binds 23S rRNA. One of the proteins that surrounds the polypeptide exit tunnel on the outside of the ribosome. Forms the main docking site for trigger factor binding to the ribosome. In Chromobacterium violaceum (strain ATCC 12472 / DSM 30191 / JCM 1249 / CCUG 213 / NBRC 12614 / NCIMB 9131 / NCTC 9757 / MK), this protein is Large ribosomal subunit protein uL23.